Consider the following 1647-residue polypeptide: Ras GTPase-activating-like protein IQG1 (1647 aa).

The interval 18 to 51 (DTTATTTTTTTSNVLQPSNRLNSPTKFNRKSLDN) is disordered. A compositionally biased stretch (low complexity) spans 19-28 (TTATTTTTTT). The segment covering 29 to 43 (SNVLQPSNRLNSPTK) has biased composition (polar residues). Ser48 is subject to Phosphoserine. Residues Thr66, Thr72, and Thr82 each carry the phosphothreonine modification. Phosphoserine occurs at positions 83, 91, and 139. Residues 143–162 (FNTQSNVHTPLKQLNQPIGT) are compositionally biased toward polar residues. Residues 143–175 (FNTQSNVHTPLKQLNQPIGTPSSSSLSPAKNAS) are disordered. Over residues 163–175 (PSSSSLSPAKNAS) the composition is skewed to low complexity. A phosphoserine mark is found at Ser165, Ser167, and Ser169. In terms of domain architecture, Calponin-homology (CH) spans 184–291 (LCRIEAIKQW…FCLHALSYIL (108 aa)). The tract at residues 326-427 (PLPNFSSADT…STSNAKLELH (102 aa)) is disordered. Residues 342–355 (TSNNNSSTTSATAA) show a composition bias toward low complexity. A Phosphothreonine modification is found at Thr367. Residues 368–379 (PSPLKRPQQLQK) are compositionally biased toward low complexity. Ser369 bears the Phosphoserine mark. 2 stretches are compositionally biased toward basic and acidic residues: residues 380–392 (KQLELVEDNKPEL) and 402–413 (ISRDDPFTDRVD). Residues Ser433 and Ser440 each carry the phosphoserine modification. 9 IQ domains span residues 467-478 (FQSLARGAVFRY), 528-539 (LQSIIRKNFVIN), 556-567 (LQSLIRGKLTRD), 586-597 (FQSLVRMKSIYS), 616-627 (LQSIARSQLYHR), 642-653 (IQSIIRRNAVIE), 672-683 (LQSIARGGVART), 734-745 (VQTLFRGVLSRY), and 764-775 (LQSVARGKLMRG). Residues 841–919 (LSDLKDLIIE…KKIELWQTLF (79 aa)) are a coiled coil. The 266-residue stretch at 958-1223 (PVRDSSITYH…DTVKSIISQA (266 aa)) folds into the Ras-GAP domain. Ser1064, Ser1068, Ser1088, Ser1383, and Ser1385 each carry phosphoserine.

As to quaternary structure, interacts with myosin MYO1 and its light chain MLC1. Interacts with BNI1. Interacts with BNR1. Interacts with CLB2. Interacts with CLB4. Interacts with CDC28. Hyperphosphorylated. Phosphorylation is cell cycle-dependent and peaks at the time of cytokinesis. Contains 21 consensus sites for cyclin-dependent kinases (CDKs). At least some of them are phosphorylated by the CLB2-CDC28 kinase complex. Mutation of 15 of the phosphorylation sites to Ala caused both premature assembly and delayed disassembly of the actomyosin ring, blocked interaction with the actin-nucleating proteins BNI1 and BNR1, and resulted in defects in cytokinesis.

The protein resides in the bud neck. In terms of biological role, required for the assembly and the contraction of the actomyosin ring at the bud neck during cytokinesis. The polypeptide is Ras GTPase-activating-like protein IQG1 (IQG1) (Candida albicans (strain SC5314 / ATCC MYA-2876) (Yeast)).